Here is a 78-residue protein sequence, read N- to C-terminus: Large ribosomal subunit protein bL28 (78 aa).

It belongs to the bacterial ribosomal protein bL28 family.

The chain is Large ribosomal subunit protein bL28 from Marinobacter nauticus (strain ATCC 700491 / DSM 11845 / VT8) (Marinobacter aquaeolei).